Here is a 486-residue protein sequence, read N- to C-terminus: Intermediate cleaving peptidase 55 (486 aa).

A mitochondrion-targeting transit peptide spans 1 to 19 (MSGYIRTLFIRNRFSNYRL). Mn(2+) is bound by residues aspartate 317, aspartate 328, histidine 407, glutamate 434, and glutamate 457.

This sequence belongs to the peptidase M24B family. The cofactor is Mn(2+).

The protein localises to the mitochondrion inner membrane. The catalysed reaction is The enzyme cleaves the 36-Pro-Pro-37 bond of cysteine desulfurase (EC 2.8.1.7) removing three amino acid residues (Tyr-Ser-Pro) from the N-terminus after cleavage by mitochondrial processing peptidase.. Its function is as follows. Aminopeptidase which cleaves preprotein intermediates that carry destabilizing N-ter amino acid residues after the mitochondrial processing peptidase (MPP) cleavage site and is thus critical for stabilization of the mitochondrial proteome. This Schizosaccharomyces pombe (strain 972 / ATCC 24843) (Fission yeast) protein is Intermediate cleaving peptidase 55 (icp55).